The primary structure comprises 307 residues: Glycerol-3-phosphate dehydrogenase [NAD(P)+] (307 aa).

Residues Trp14, Arg34, Arg35, and Lys82 each contribute to the NADPH site. The sn-glycerol 3-phosphate site is built by Lys82 and Gly110. An NADPH-binding site is contributed by Ser114. Positions 165, 218, 228, 229, and 230 each coordinate sn-glycerol 3-phosphate. The active-site Proton acceptor is the Lys165. Arg229 provides a ligand contact to NADPH. Glu255 lines the NADPH pocket.

It belongs to the NAD-dependent glycerol-3-phosphate dehydrogenase family.

It localises to the cytoplasm. The enzyme catalyses sn-glycerol 3-phosphate + NAD(+) = dihydroxyacetone phosphate + NADH + H(+). The catalysed reaction is sn-glycerol 3-phosphate + NADP(+) = dihydroxyacetone phosphate + NADPH + H(+). Its pathway is membrane lipid metabolism; glycerophospholipid metabolism. Its function is as follows. Catalyzes the reduction of the glycolytic intermediate dihydroxyacetone phosphate (DHAP) to sn-glycerol 3-phosphate (G3P), the key precursor for phospholipid synthesis. The polypeptide is Glycerol-3-phosphate dehydrogenase [NAD(P)+] (Trichormus variabilis (strain ATCC 29413 / PCC 7937) (Anabaena variabilis)).